We begin with the raw amino-acid sequence, 386 residues long: Agamous-like MADS-box protein AGL30 (386 aa).

The MADS-box domain maps to 1–53 (MGRVKLKIKKLENTNGRQSTFAKRKNGILKKANELSILCDIDIVLLMFSPTGK). The disordered stretch occupies residues 341-360 (PDSSAYNDNTNQTRFGSSSS). The segment covering 344–356 (SAYNDNTNQTRFG) has biased composition (polar residues).

In terms of assembly, forms heterodimers with AGL66 and AGL104. As to expression, expressed in pollen.

The protein localises to the nucleus. Its function is as follows. Probable transcription factor that forms heterodimers with the MADS-box proteins AGL66 and AGL104 and is involved in the regulation of pollen maturation at the late stages of pollen development and pollen tube growth. In Arabidopsis thaliana (Mouse-ear cress), this protein is Agamous-like MADS-box protein AGL30.